A 640-amino-acid polypeptide reads, in one-letter code: RNA polymerase II elongation factor ELL2 (640 aa).

Disordered stretches follow at residues 172 to 202 (AVSD…STIS), 290 to 320 (KLNP…PQKR), and 343 to 490 (RVPP…EEDL). Polar residues-rich tracts occupy residues 184 to 202 (TPMN…STIS) and 291 to 318 (LNPS…SSPQ). Low complexity predominate over residues 360 to 372 (AAGLPLPPAAAAI). Positions 391 to 401 (IVNSNSNSPST) are enriched in polar residues. Residues 457–470 (MSHKKSKKKSKKHK) are compositionally biased toward basic residues. Over residues 471 to 490 (EKDQIKKHDIETIEEKEEDL) the composition is skewed to basic and acidic residues. 2 positions are modified to phosphoserine: Ser-503 and Ser-580. Residues 526-636 (PDYLIKYIAI…LIGEFDQQQA (111 aa)) form the OCEL domain.

This sequence belongs to the ELL/occludin family. In terms of assembly, component of the super elongation complex (SEC), at least composed of EAF1, EAF2, CDK9, MLLT3/AF9, AFF (AFF1 or AFF4), the P-TEFb complex and ELL (ELL, ELL2 or ELL3). Component of the little elongation complex (LEC), at least composed of ELL (ELL, ELL2 or ELL3), ZC3H8, ICE1 and ICE2. Interacts with AFF4; the interaction is direct and leads to stabilize ELL2 and prevent ELL2 ubiquitination. Interacts with EAF1 and EAF2. In terms of processing, ubiquitinated by SIAH1, leading to its degradation by the proteasome. Interaction with AFF4 stabilizes ELL2 and prevents ELL2 ubiquitination.

Its subcellular location is the nucleus. Its function is as follows. Elongation factor component of the super elongation complex (SEC), a complex required to increase the catalytic rate of RNA polymerase II transcription by suppressing transient pausing by the polymerase at multiple sites along the DNA. Component of the little elongation complex (LEC), a complex required to regulate small nuclear RNA (snRNA) gene transcription by RNA polymerase II and III. Plays a role in immunoglobulin secretion in plasma cells: directs efficient alternative mRNA processing, influencing both proximal poly(A) site choice and exon skipping, as well as immunoglobulin heavy chain (IgH) alternative processing. Probably acts by regulating histone modifications accompanying transition from membrane-specific to secretory IgH mRNA expression. This chain is RNA polymerase II elongation factor ELL2 (ELL2), found in Homo sapiens (Human).